We begin with the raw amino-acid sequence, 174 residues long: Ribosome maturation factor RimM (174 aa).

Residues 96–169 form the PRC barrel domain; sequence KDTFFICDLI…KMVVDLPQGL (74 aa).

This sequence belongs to the RimM family. Binds ribosomal protein uS19.

The protein resides in the cytoplasm. Its function is as follows. An accessory protein needed during the final step in the assembly of 30S ribosomal subunit, possibly for assembly of the head region. Essential for efficient processing of 16S rRNA. May be needed both before and after RbfA during the maturation of 16S rRNA. It has affinity for free ribosomal 30S subunits but not for 70S ribosomes. This Acetivibrio thermocellus (strain ATCC 27405 / DSM 1237 / JCM 9322 / NBRC 103400 / NCIMB 10682 / NRRL B-4536 / VPI 7372) (Clostridium thermocellum) protein is Ribosome maturation factor RimM.